The primary structure comprises 394 residues: NAD(P)H-quinone oxidoreductase subunit H (394 aa).

This sequence belongs to the complex I 49 kDa subunit family. As to quaternary structure, NDH-1 can be composed of about 15 different subunits; different subcomplexes with different compositions have been identified which probably have different functions.

Its subcellular location is the cellular thylakoid membrane. It carries out the reaction a plastoquinone + NADH + (n+1) H(+)(in) = a plastoquinol + NAD(+) + n H(+)(out). The catalysed reaction is a plastoquinone + NADPH + (n+1) H(+)(in) = a plastoquinol + NADP(+) + n H(+)(out). In terms of biological role, NDH-1 shuttles electrons from an unknown electron donor, via FMN and iron-sulfur (Fe-S) centers, to quinones in the respiratory and/or the photosynthetic chain. The immediate electron acceptor for the enzyme in this species is believed to be plastoquinone. Couples the redox reaction to proton translocation, and thus conserves the redox energy in a proton gradient. Cyanobacterial NDH-1 also plays a role in inorganic carbon-concentration. This Prochlorococcus marinus (strain MIT 9303) protein is NAD(P)H-quinone oxidoreductase subunit H.